A 151-amino-acid polypeptide reads, in one-letter code: Myosin light polypeptide 6 (151 aa).

Position 2 is an N-acetylcysteine (Cys-2). In terms of domain architecture, EF-hand 1 spans 7-42 (DQTAEFKEAFQLFDRTGDGKILYSQCGDVMRALGQN). Phosphoserine is present on Ser-57. N6-acetyllysine is present on Lys-81. The EF-hand 2 domain maps to 84-119 (GTYEDYVEGLRVFDKEGNGTVMGAEIRHVLVTLGEK).

Myosin is a hexamer of 2 heavy chains and 4 light chains. Interacts with SPATA6.

In terms of biological role, regulatory light chain of myosin. Does not bind calcium. This Bos taurus (Bovine) protein is Myosin light polypeptide 6 (MYL6).